Consider the following 391-residue polypeptide: Elongation factor Tu (391 aa).

Residues 10 to 201 form the tr-type G domain; that stretch reads KPHVNIGTIG…AVDDYIPTPE (192 aa). The segment at 19–26 is G1; that stretch reads GHVDHGKT. 19 to 26 is a GTP binding site; that stretch reads GHVDHGKT. Threonine 26 is a binding site for Mg(2+). Residues 55–59 form a G2 region; that stretch reads GITIS. Residues 76–79 are G3; the sequence is DCPG. Residues 76 to 80 and 131 to 134 each bind GTP; these read DCPGH and NKVD. The tract at residues 131-134 is G4; sequence NKVD. A G5 region spans residues 169–171; sequence SAL.

The protein belongs to the TRAFAC class translation factor GTPase superfamily. Classic translation factor GTPase family. EF-Tu/EF-1A subfamily. As to quaternary structure, monomer.

The protein resides in the cytoplasm. It catalyses the reaction GTP + H2O = GDP + phosphate + H(+). GTP hydrolase that promotes the GTP-dependent binding of aminoacyl-tRNA to the A-site of ribosomes during protein biosynthesis. In Paracoccus denitrificans (strain Pd 1222), this protein is Elongation factor Tu.